We begin with the raw amino-acid sequence, 500 residues long: ATP synthase subunit beta (500 aa).

An ATP-binding site is contributed by 155–162; sequence GGAGVGKT.

The protein belongs to the ATPase alpha/beta chains family. In terms of assembly, F-type ATPases have 2 components, CF(1) - the catalytic core - and CF(0) - the membrane proton channel. CF(1) has five subunits: alpha(3), beta(3), gamma(1), delta(1), epsilon(1). CF(0) has three main subunits: a(1), b(2) and c(9-12). The alpha and beta chains form an alternating ring which encloses part of the gamma chain. CF(1) is attached to CF(0) by a central stalk formed by the gamma and epsilon chains, while a peripheral stalk is formed by the delta and b chains.

It localises to the cell inner membrane. The catalysed reaction is ATP + H2O + 4 H(+)(in) = ADP + phosphate + 5 H(+)(out). In terms of biological role, produces ATP from ADP in the presence of a proton gradient across the membrane. The catalytic sites are hosted primarily by the beta subunits. The protein is ATP synthase subunit beta of Azobacteroides pseudotrichonymphae genomovar. CFP2.